Consider the following 152-residue polypeptide: Regulatory protein RecX (152 aa).

The protein belongs to the RecX family.

Its subcellular location is the cytoplasm. Modulates RecA activity. In Haemophilus influenzae (strain PittGG), this protein is Regulatory protein RecX.